The chain runs to 328 residues: Transcription initiation factor TFIID subunit 8 (328 aa).

The Histone-fold domain maps to 16–83 (RRILNKVVSQ…DVSLALINMG (68 aa)). The disordered stretch occupies residues 229–309 (NRTEDEPSKD…PGTMPSRSLA (81 aa)). Residues S236, S245, and S255 each carry the phosphoserine modification. Residues 239-251 (DGEEGDSENEEMD) show a composition bias toward acidic residues. Basic and acidic residues predominate over residues 252-264 (GDKSKEEKPELDI). Positions 296 to 309 (NCPTPGTMPSRSLA) are enriched in polar residues.

This sequence belongs to the TAF8 family. Belongs to the TFIID complex which is composed of TATA binding protein (Tbp) and a number of TBP-associated factors (TAFs). Histone fold interacts with N-terminus of Taf10b.

The protein resides in the nucleus. In terms of biological role, TFIID is a multimeric protein complex that plays a central role in mediating promoter responses to various activators and repressors. The protein is Transcription initiation factor TFIID subunit 8 of Drosophila melanogaster (Fruit fly).